A 284-amino-acid chain; its full sequence is T-cell leukemia homeobox protein 2 (284 aa).

Disordered stretches follow at residues 1–50, 78–106, and 139–166; these read MEPG…NGAF, GGVIRVPAHRPLPVPPPAGGAPAVPGPSG, and FSGTRRIGHPYQNRTPPKRKKPRTSFSR. The segment covering 30–50 has biased composition (gly residues); it reads TPGGGLGLGRGGQGHGENGAF. A compositionally biased stretch (pro residues) spans 87-96; sequence RPLPVPPPAG. A DNA-binding region (homeobox) is located at residues 157–216; it reads RKKPRTSFSRSQVLELERRFLRQKYLASAERAALAKALRMTDAQVKTWFQNRRTKWRRQT.

Its subcellular location is the nucleus. Transcription activator that binds DNA elements with the consensus sequence 5'-CGGTAATTGG-3'. Binds DNA via its homeobox. Required for normal cell death of enteric neurons in the gastrointestinal tract. Required for normal development of the enteric nervous system, and for proper development of normal motility of the gastrointestinal tract. This chain is T-cell leukemia homeobox protein 2 (TLX2), found in Homo sapiens (Human).